The sequence spans 250 residues: DNA polymerase sliding clamp (250 aa).

This sequence belongs to the PCNA family. In terms of assembly, homotrimer. The subunits circularize to form a toroid; DNA passes through its center. Replication factor C (RFC) is required to load the toroid on the DNA.

Functionally, sliding clamp subunit that acts as a moving platform for DNA processing. Responsible for tethering the catalytic subunit of DNA polymerase and other proteins to DNA during high-speed replication. The chain is DNA polymerase sliding clamp from Methanococcus maripaludis (strain C7 / ATCC BAA-1331).